The primary structure comprises 28 residues: Putative GDSL-motif lipase/hydrolase-like protein (28 aa).

It belongs to the 'GDSL' lipolytic enzyme family.

This Populus euphratica (Euphrates poplar) protein is Putative GDSL-motif lipase/hydrolase-like protein.